Here is a 499-residue protein sequence, read N- to C-terminus: Cryptochrome-1 (499 aa).

FAD-binding positions include Arg-190, Ser-218, Ser-220, Gln-261, His-328, 360 to 362 (DAD), Cys-366, and Asn-369.

It belongs to the DNA photolyase class-1 family. As to quaternary structure, interacts with tim and per; promoted by light conditions. It depends on FAD as a cofactor.

Its subcellular location is the cytoplasm. The protein resides in the perinuclear region. It is found in the nucleus. In terms of biological role, blue light-dependent regulator that is the input of the circadian feedback loop. Has no photolyase activity for cyclobutane pyrimidine dimers or 6-4 photoproducts. Regulation of expression by light suggests a role in photoreception for locomotor activity rhythms. Functions, together with per, as a transcriptional repressor required for the oscillation of peripheral circadian clocks and for the correct specification of clock cells. Genes directly activated by the transcription factors Clock (Clk) and cycle (cyc) are repressed by cry. In Culex quinquefasciatus (Southern house mosquito), this protein is Cryptochrome-1.